Consider the following 284-residue polypeptide: Avenin-like b10 (284 aa).

The first 18 residues, 1 to 18 (MKVFILALLALAATTAIA), serve as a signal peptide directing secretion.

Belongs to the prolamin family. Post-translationally, contains disulfide bonds.

Its function is as follows. Seed storage protein. Might be integrated via inter-chain disulfide bonds within the glutenin polymer. This chain is Avenin-like b10, found in Triticum aestivum (Wheat).